A 328-amino-acid chain; its full sequence is Tetraacyldisaccharide 4'-kinase (328 aa).

55 to 62 (TAGGNGKT) serves as a coordination point for ATP.

It belongs to the LpxK family.

It catalyses the reaction a lipid A disaccharide + ATP = a lipid IVA + ADP + H(+). It participates in glycolipid biosynthesis; lipid IV(A) biosynthesis; lipid IV(A) from (3R)-3-hydroxytetradecanoyl-[acyl-carrier-protein] and UDP-N-acetyl-alpha-D-glucosamine: step 6/6. Functionally, transfers the gamma-phosphate of ATP to the 4'-position of a tetraacyldisaccharide 1-phosphate intermediate (termed DS-1-P) to form tetraacyldisaccharide 1,4'-bis-phosphate (lipid IVA). The sequence is that of Tetraacyldisaccharide 4'-kinase from Shigella dysenteriae serotype 1 (strain Sd197).